The primary structure comprises 196 residues: Large ribosomal subunit protein bL9 (196 aa).

It belongs to the bacterial ribosomal protein bL9 family.

Binds to the 23S rRNA. This is Large ribosomal subunit protein bL9 from Gluconobacter oxydans (strain 621H) (Gluconobacter suboxydans).